A 191-amino-acid chain; its full sequence is ATP-dependent Clp protease proteolytic subunit 1 (191 aa).

Serine 91 functions as the Nucleophile in the catalytic mechanism. Histidine 116 is an active-site residue.

The protein belongs to the peptidase S14 family. In terms of assembly, fourteen ClpP subunits assemble into 2 heptameric rings which stack back to back to give a disk-like structure with a central cavity, resembling the structure of eukaryotic proteasomes.

Its subcellular location is the cytoplasm. It carries out the reaction Hydrolysis of proteins to small peptides in the presence of ATP and magnesium. alpha-casein is the usual test substrate. In the absence of ATP, only oligopeptides shorter than five residues are hydrolyzed (such as succinyl-Leu-Tyr-|-NHMec, and Leu-Tyr-Leu-|-Tyr-Trp, in which cleavage of the -Tyr-|-Leu- and -Tyr-|-Trp bonds also occurs).. Its function is as follows. Cleaves peptides in various proteins in a process that requires ATP hydrolysis. Has a chymotrypsin-like activity. Plays a major role in the degradation of misfolded proteins. The chain is ATP-dependent Clp protease proteolytic subunit 1 from Chlamydia caviae (strain ATCC VR-813 / DSM 19441 / 03DC25 / GPIC) (Chlamydophila caviae).